Reading from the N-terminus, the 410-residue chain is MSSDPNFSLTSFLECLSQIEHEFLRDKVENPPVLVRKLQELQQKTPGHVASLLHDPETIQQIHQTAHRIEVAVKVFIHIDQKFTSGCSEVVHGTSKVMQEVNVGSPAVGCRNLSEDLPAYHMRKHFLLTLDSPYPTQEEKEGLVRLTNESTARVGLSNATRPPLEVHQLTLWFINARRRSGWSHILKKFAREDRSRMKRLVRAKLSSSTQSSPPSPMPEYPSNNLDNILSDNLGRPLTPADKQQFEDDWASMISWIKYGVKEKVGDWVYDLCAASKKTPKPGMPRPVTTVAKRQPARKTKPAAKPNSRTANPRASTTPSIDSTLDSSKLESTPELSMCSTADTSFSTFGSSLSMSHYNPFQDGNDILQSPTVKARGNRKVKALPKRAGKQQPDEVENGKIPFLCLSVAFV.

The segment at 1-110 (MSSDPNFSLT…VNVGSPAVGC (110 aa)) is variable domain between B alleles. The homeobox; TALE-type DNA-binding region spans 107 to 184 (AVGCRNLSED…NARRRSGWSH (78 aa)). Positions 111–410 (RNLSEDLPAY…PFLCLSVAFV (300 aa)) are highly conserved between B alleles. Disordered regions lie at residues 202 to 225 (RAKL…SNNL), 278 to 336 (TPKP…PELS), and 374 to 394 (ARGN…QPDE). The short motif at 276–308 (KKTPKPGMPRPVTTVAKRQPARKTKPAAKPNSR) is the Nuclear localization signal element. Positions 306 to 336 (NSRTANPRASTTPSIDSTLDSSKLESTPELS) are enriched in polar residues. A not essential for B7 function region spans residues 333–410 (PELSMCSTAD…PFLCLSVAFV (78 aa)). The segment covering 375 to 388 (RGNRKVKALPKRAG) has biased composition (basic residues).

The protein belongs to the TALE/M-ATYP homeobox family.

It localises to the nucleus. The B locus has at least 25 alleles, and any combination of two different B alleles yields a multimeric regulatory protein, that activates genes responsible for the pathogenicity and for the sexual development of the fungus within the corn plant. The chain is Mating-type locus allele B7 protein from Mycosarcoma maydis (Corn smut fungus).